The chain runs to 872 residues: Bifunctional heparan sulfate N-deacetylase/N-sulfotransferase 4 (872 aa).

The Cytoplasmic portion of the chain corresponds to 1-13 (MNLILKFRRSFRT). The chain crosses the membrane as a helical; Signal-anchor for type II membrane protein span at residues 14-34 (LIVLLATFCLVSILISAYFLY). The Lumenal portion of the chain corresponds to 35–872 (SGYKQEMTLI…WLRQELQKVR (838 aa)). The tract at residues 36-588 (GYKQEMTLIE…KRHKDIWSRE (553 aa)) is heparan sulfate N-deacetylase 4. N-linked (GlcNAc...) asparagine glycans are attached at residues Asn-226, Asn-341, and Asn-391. Residues 589-872 (KTCDHLPKFL…WLRQELQKVR (284 aa)) form a heparan sulfate N-sulfotransferase 4 region. The active-site For sulfotransferase activity is Lys-604. A 3'-phosphoadenylyl sulfate-binding site is contributed by 604–608 (KTGTT). Residue Asn-657 is glycosylated (N-linked (GlcNAc...) asparagine). A 3'-phosphoadenylyl sulfate-binding site is contributed by Ser-702. The N-linked (GlcNAc...) asparagine glycan is linked to Asn-793. Residues Cys-808 and Cys-818 are joined by a disulfide bond. A 3'-phosphoadenylyl sulfate-binding site is contributed by 823 to 827 (KGRKY).

Belongs to the sulfotransferase 1 family. NDST subfamily. In terms of assembly, monomer. Expressed at low level in brain and throughout embryogenesis. Not expressed in other tissues.

Its subcellular location is the golgi apparatus membrane. The catalysed reaction is alpha-D-glucosaminyl-[heparan sulfate](n) + 3'-phosphoadenylyl sulfate = N-sulfo-alpha-D-glucosaminyl-[heparan sulfate](n) + adenosine 3',5'-bisphosphate + 2 H(+). Its pathway is glycan metabolism; heparan sulfate biosynthesis. It functions in the pathway glycan metabolism; heparin biosynthesis. Its function is as follows. Essential bifunctional enzyme that catalyzes both the N-deacetylation and the N-sulfation of glucosamine (GlcNAc) of the glycosaminoglycan in heparan sulfate. Modifies the GlcNAc-GlcA disaccharide repeating sugar backbone to make N-sulfated heparosan, a prerequisite substrate for later modifications in heparin biosynthesis. Has low deacetylase activity but high sulfotransferase activity. This Mus musculus (Mouse) protein is Bifunctional heparan sulfate N-deacetylase/N-sulfotransferase 4 (Ndst4).